Reading from the N-terminus, the 168-residue chain is Cilia- and flagella-associated protein 276 (168 aa).

Disordered regions lie at residues 35-61 (AHLA…RDTF) and 149-168 (HTAA…FFST). Residues 38–55 (AQQQDPWSRLSSTPTATS) show a composition bias toward polar residues.

Microtubule inner protein component of sperm flagellar doublet microtubules. Predominantly expressed in nervous system tissues, such as the spinal cord, cerebrum, cerebellum, and sciatic nerve.

The protein localises to the cytoplasm. The protein resides in the cytoskeleton. It is found in the cilium axoneme. Its subcellular location is the flagellum axoneme. Microtubule inner protein (MIP) part of the dynein-decorated doublet microtubules (DMTs) in cilia axoneme, which is required for motile cilia beating. May play an important role for the maintenance of myelin-axon integrity. May affect intracellular Ca(2+) homeostasis. This Mus musculus (Mouse) protein is Cilia- and flagella-associated protein 276.